The following is a 2058-amino-acid chain: E3 ubiquitin-protein ligase ubr-1 (2058 aa).

The UBR-type zinc-finger motif lies at 93–164 (QICGHVFKNG…EGYACANHEK (72 aa)). The segment at 1107–1175 (VPEAAPAPEN…TPSEKSETVV (69 aa)) is disordered. Over residues 1108 to 1119 (PEAAPAPENKPA) the composition is skewed to low complexity. Basic and acidic residues-rich tracts occupy residues 1123-1138 (EEIK…EMRQ) and 1153-1175 (KKIE…ETVV). The segment at 1217–1335 (LTCILCQEDE…GEYQCPLCKR (119 aa)) adopts an RING-type; atypical zinc-finger fold. Disordered regions lie at residues 1381-1416 (LSSE…DTAN) and 1475-1499 (PAAT…ESGK). The segment covering 1388-1397 (KKGHSRKRSH) has biased composition (basic residues). A compositionally biased stretch (basic and acidic residues) spans 1398–1413 (SERSLLDLEKLSKDPD). The segment covering 1486–1495 (GSSSRIPESQ) has biased composition (polar residues). The helical transmembrane segment at 1695 to 1715 (ILQIDILSLAISLMMTIGWTW) threads the bilayer.

This sequence belongs to the E3 ubiquitin-protein ligase UBR1-like family. As to quaternary structure, interacts with ubc-1. Component of a complex containing at least ced-3, ubr-1 and possibly ate-1. Within complex interacts with ced-3 (via the p17 subunit); this interaction is required for the ced-3-mediated cleavage and subsequent degradation of the heterochronic protein lin-28. As to expression, expressed in pharyngeal muscles, body wall muscles and a subset of neurons throughout postembryonic development. Prominently expressed in premotor interneurons, but not expressed in ventral cord motor neurons. Weakly expressed in hypodermal seam cells.

It is found in the membrane. It carries out the reaction S-ubiquitinyl-[E2 ubiquitin-conjugating enzyme]-L-cysteine + [acceptor protein]-L-lysine = [E2 ubiquitin-conjugating enzyme]-L-cysteine + N(6)-ubiquitinyl-[acceptor protein]-L-lysine.. It participates in protein modification; protein ubiquitination. Functionally, E3 ubiquitin-protein ligase which is a component of the N-end rule pathway. Recognizes and binds to proteins bearing specific N-terminal residues that are destabilizing according to the N-end rule, leading to their ubiquitination and subsequent degradation. In complex with ced-3, required for the ced-3-mediated cleavage and subsequent degradation of the heterochronic protein lin-28 to regulate seam cell fate patterning during larval development. Negatively regulates glutamate metabolism through the aspartate aminotransferase got-1.2. Modulation of glutamate levels most likely controls locomotory behavior, in particular backwards locomotion or 'reversals'. This Caenorhabditis elegans protein is E3 ubiquitin-protein ligase ubr-1.